We begin with the raw amino-acid sequence, 363 residues long: Peptide chain release factor 2 (363 aa).

Gln-251 carries the post-translational modification N5-methylglutamine.

The protein belongs to the prokaryotic/mitochondrial release factor family. In terms of processing, methylated by PrmC. Methylation increases the termination efficiency of RF2.

Its subcellular location is the cytoplasm. Peptide chain release factor 2 directs the termination of translation in response to the peptide chain termination codons UGA and UAA. The chain is Peptide chain release factor 2 from Helicobacter pylori (strain Shi470).